The primary structure comprises 194 residues: Calcium channel flower (194 aa).

3 helical membrane-spanning segments follow: residues 35-55, 66-88, and 107-127; these read LGIV…FSII, IIQM…VCFE, and GLYI…ASLF.

Belongs to the calcium channel flower family. As to quaternary structure, homomultimer. Associates with the dally/ magu complex.

Its subcellular location is the cell membrane. The protein localises to the cytoplasmic vesicle. It is found in the secretory vesicle. The protein resides in the synaptic vesicle membrane. It localises to the presynaptic cell membrane. Its subcellular location is the endosome. With respect to regulation, channel activity is inhibited by La(3+), which reduces Ca(2+) influx and thus inhibits it's function in promoting activity-dependent bulk endocytosis (ADBE) in response to high stimuli. Its function is as follows. Transmembrane protein which mediates synaptic endocytosis, fitness-based cell culling, neuronal culling, morphogen gradient scaling, and calcium transport. Regulates synaptic endocytosis and hence couples exo- with endocytosis. Controls two major modes of synaptic vesicle (SV) endocytosis in the synaptic boutons of neuromuscular junctions (NMJs); Ca(2+) channel-independent Clathrin-mediated endocytosis (CME) in response to mild stimulation, and Ca(2+) channel-dependent activity-dependent bulk endocytosis (ADBE) in response to strong stimulation. Functions in ADBE and subsequent SV reformation from bulk endosomes by initiating Ca(2+) channel-dependent phosphatidylinositol 4,5-bisphosphate (PtdIns(4,5)P2) compartmentalization in synaptic boutons. There it acts at the periactive zone to provide the low Ca(2+) levels required to initiate Calcineurin activation and upregulate PtdIns(4,5)P2. Conversely PtdIns(4,5)P2 enhances fwe Ca(2+) channel-activity, establishing a positive feedback loop that induces PtdIns(4,5)P2 microdomain at the periactive zone. These microdomains trigger bulk membrane invagination (i.e. ADBE) by triggering actin polymerization while also promoting localization of fwe to bulk endosomes, thereby removing the ADBE trigger to reduce endocytosis and prevent excess membrane uptake. PtdIns(4,5)P2 then promotes SV reformation from the bulk endosomes, to coordinate ADBE and subsequent SV reformation. Different combinations of the flower isoforms at the cell membrane are also required for the identification and elimination of suboptimal or supernumerary cells during development, regeneration, and adulthood. Required for the recognition and elimination of unfit cells in the developing wing during cell competition. In the developing pupal retina, mediates the elimination of unwanted postmitotic neurons, including supernumerary photoreceptor neurons that form at the periphery of the retina and are contained within incomplete ommatidia units. Also required for efficient elimination and replacement of old neurons by newly generated neurons during regeneration in the adult brain following mechanical injury. Downstream of the flower fitness fingerprints, cells identified as unwanted or unfit are eliminated via apoptosis through the expression of ahuizotl (azot). However, the cells marked for elimination by the flower isoforms only undergo apoptosis if additional thresholds are met; (1) their neighboring fit/healthy cells express different levels of the fwe isoforms, and (2) the levels of the protective signal SPARC expressed by the loser or unwanted cells are unable to inhibit caspase activation. These additional thresholds for flower-mediated apoptosis, allows useful cells to recover from transient and limited stress before they are unnecessarily eliminated. Functions with dally and magu in a mechanism of scaling, which utilises apoptosis to ensure that the dpp morphogen gradient, which mediates organ growth, remains proportional to the size of the growing wing. In this mechanism, fwe represses dally- and Magu-dependent activity in expanding the gradient, and dally/Magu inhibits fwe-dependent apoptosis to keep cell death rate low. When the levels of these different proteins are optimally regulated the gradient correctly scales with organ growth but when this fails, fwe-mediated apoptosis is activated to trim the developing tissue to match the correct size of the gradient. The protein is Calcium channel flower of Drosophila sechellia (Fruit fly).